We begin with the raw amino-acid sequence, 514 residues long: Ankyrin repeat domain-containing protein 34B (514 aa).

4 ANK repeats span residues 9 to 38, 42 to 79, 83 to 113, and 117 to 146; these read SEGNSLIKAVHQSRLRLTRLLLEGGAYINE, RGETPLMIACKTKHVDHQSVSKAKMVKYLLENNADPNI, SGKTALMHACLEKAGPEVVSLLLKSGADLSL, and SSYSALVYAINSEDTETLKVLLSACKAKGK. The tract at residues 220 to 249 is disordered; sequence NDDTWDPGSPVRKPALAPKGPKLPHAPPWV. Phosphoserine is present on Ser263. Thr272 bears the Phosphothreonine mark. Ser296 is modified (phosphoserine).

It belongs to the ANKRD34 family. Phosphorylated.

The protein localises to the cytoplasm. It is found in the nucleus. This is Ankyrin repeat domain-containing protein 34B (ANKRD34B) from Homo sapiens (Human).